We begin with the raw amino-acid sequence, 288 residues long: L-xylulose reductase (288 aa).

Positions 39, 113, and 147 each coordinate NADP(+). The active-site Proton donor is the Ser-181. NADP(+) is bound by residues Tyr-196, Lys-200, Ile-228, and Thr-230. Catalysis depends on Tyr-196, which acts as the Proton acceptor. The active-site Lowers pKa of active site Tyr is Lys-200.

Belongs to the short-chain dehydrogenases/reductases (SDR) family.

It catalyses the reaction xylitol + NADP(+) = L-xylulose + NADPH + H(+). It functions in the pathway carbohydrate degradation; L-arabinose degradation via L-arabinitol; D-xylulose 5-phosphate from L-arabinose (fungal route): step 3/5. Functionally, L-xylulose reductase involved in the catabolism of L-arabinose through an oxidoreductive pathway. Catalyzes the NADPH-dependent reduction of L-xylulose. Is also able to convert D-xylulose, D-ribulose, L-sorbose, and D-fructose to their corresponding polyols. The polypeptide is L-xylulose reductase (Hypocrea jecorina (strain QM6a) (Trichoderma reesei)).